The primary structure comprises 519 residues: Serine/threonine-protein kinase RIO1 (519 aa).

Over residues 1-10 (MTPAPEPQDP) the composition is skewed to pro residues. A disordered region spans residues 1 to 54 (MTPAPEPQDPPTIHEPVATEQTDDISDWDVESDYEDGYGAPSKSQAQGGASAAD). Residues 21–36 (QTDDISDWDVESDYED) show a composition bias toward acidic residues. Positions 39–53 (GAPSKSQAQGGASAA) are enriched in low complexity. The Protein kinase domain maps to 122–519 (SEIYGTISTG…KLVAANKKRK (398 aa)). Positions 154 and 228 each coordinate ATP. The active-site Proton acceptor is the Asp-281. The Mg(2+) site is built by Asn-286 and Asp-298. Catalysis depends on Asp-298, which acts as the 4-aspartylphosphate intermediate. The interval 418 to 519 (ADSKVPESTG…KLVAANKKRK (102 aa)) is disordered. Residues 439-464 (GSEDEEGDEGESGEVESGDEEREEGE) are compositionally biased toward acidic residues. The segment at 440 to 519 (SEDEEGDEGE…KLVAANKKRK (80 aa)) is association with (pre-)40S ribosomal particle. Basic residues-rich tracts occupy residues 470-489 (KKRPRGKKHLDKAEKHAHKM) and 497-519 (EKRKEKMPKHVKKKLVAANKKRK).

It belongs to the protein kinase superfamily. RIO-type Ser/Thr kinase family. Requires Mg(2+) as cofactor. Post-translationally, autophosphorylated.

Its subcellular location is the cytoplasm. The catalysed reaction is L-seryl-[protein] + ATP = O-phospho-L-seryl-[protein] + ADP + H(+). It catalyses the reaction L-threonyl-[protein] + ATP = O-phospho-L-threonyl-[protein] + ADP + H(+). It carries out the reaction ATP + H2O = ADP + phosphate + H(+). Its function is as follows. Involved in the final steps of cytoplasmic maturation of the 40S ribosomal subunit. In vitro, has strong ATPase activity and only low protein kinase activity. The sequence is that of Serine/threonine-protein kinase RIO1 from Chaetomium thermophilum (strain DSM 1495 / CBS 144.50 / IMI 039719) (Thermochaetoides thermophila).